A 201-amino-acid polypeptide reads, in one-letter code: Ribonuclease HII (201 aa).

Residues 12–201 form the RNase H type-2 domain; that stretch reads GIVCGIDEVG…FAPVAQYMLF (190 aa). A divalent metal cation is bound by residues Asp18, Glu19, and Asp113.

Belongs to the RNase HII family. The cofactor is Mn(2+). Mg(2+) is required as a cofactor.

It localises to the cytoplasm. The catalysed reaction is Endonucleolytic cleavage to 5'-phosphomonoester.. Endonuclease that specifically degrades the RNA of RNA-DNA hybrids. This is Ribonuclease HII (rnhB) from Paramagnetospirillum magneticum (strain ATCC 700264 / AMB-1) (Magnetospirillum magneticum).